The sequence spans 595 residues: Aspartate--tRNA(Asp/Asn) ligase (595 aa).

E175 provides a ligand contact to L-aspartate. Residues 199 to 202 are aspartate; sequence QQFK. L-aspartate contacts are provided by R221 and H451. Residue 221-223 participates in ATP binding; it reads RDE. E485 provides a ligand contact to ATP. Residue R492 coordinates L-aspartate. ATP is bound at residue 537-540; sequence GVDR.

This sequence belongs to the class-II aminoacyl-tRNA synthetase family. Type 1 subfamily. In terms of assembly, homodimer.

It localises to the cytoplasm. The catalysed reaction is tRNA(Asx) + L-aspartate + ATP = L-aspartyl-tRNA(Asx) + AMP + diphosphate. Functionally, aspartyl-tRNA synthetase with relaxed tRNA specificity since it is able to aspartylate not only its cognate tRNA(Asp) but also tRNA(Asn). Reaction proceeds in two steps: L-aspartate is first activated by ATP to form Asp-AMP and then transferred to the acceptor end of tRNA(Asp/Asn). The chain is Aspartate--tRNA(Asp/Asn) ligase from Acidiphilium cryptum (strain JF-5).